Here is a 467-residue protein sequence, read N- to C-terminus: Probable Xaa-Pro aminopeptidase SMAC_04549 (467 aa).

The Mn(2+) site is built by Asp263, Asp274, Glu397, and Glu437.

The protein belongs to the peptidase M24B family. It depends on Mn(2+) as a cofactor.

The enzyme catalyses Release of any N-terminal amino acid, including proline, that is linked to proline, even from a dipeptide or tripeptide.. Its function is as follows. Catalyzes the removal of a penultimate prolyl residue from the N-termini of peptides. In Sordaria macrospora (strain ATCC MYA-333 / DSM 997 / K(L3346) / K-hell), this protein is Probable Xaa-Pro aminopeptidase SMAC_04549.